The sequence spans 515 residues: Histidine ammonia-lyase (515 aa).

The 5-imidazolinone (Ala-Gly) cross-link spans 142 to 144; that stretch reads ASG. 2,3-didehydroalanine (Ser) is present on Ser-143.

The protein belongs to the PAL/histidase family. In terms of processing, contains an active site 4-methylidene-imidazol-5-one (MIO), which is formed autocatalytically by cyclization and dehydration of residues Ala-Ser-Gly.

The protein localises to the cytoplasm. The catalysed reaction is L-histidine = trans-urocanate + NH4(+). It participates in amino-acid degradation; L-histidine degradation into L-glutamate; N-formimidoyl-L-glutamate from L-histidine: step 1/3. The protein is Histidine ammonia-lyase of Bradyrhizobium sp. (strain BTAi1 / ATCC BAA-1182).